The following is a 412-amino-acid chain: BURP domain-containing protein 13 (412 aa).

Positions 1–23 are cleaved as a signal peptide; the sequence is MARFLLLLVAVAAAAAVLSLGDA. In terms of domain architecture, BURP spans 190–406; the sequence is FFHEEAVRVG…PYGHIVWAKN (217 aa). The N-linked (GlcNAc...) asparagine glycan is linked to Asn-369.

Specifically expressed in anthers, in the tapetum and microspores (at protein level).

Required for pollen development. Probably synthesized in the tapetum, packaged in Ubisch bodies and transported at appropriate stages to the micropsores. This Oryza sativa subsp. japonica (Rice) protein is BURP domain-containing protein 13 (BURP13).